Consider the following 291-residue polypeptide: Putative butyrophilin-like protein 10 pseudogene (291 aa).

The N-terminal stretch at 1 to 26 is a signal peptide; sequence MAVTCDPEAFLSICFVTLVFLQLPLA. The region spanning 27–146 is the Ig-like V-type domain; sequence SIWKADFDVT…GEATVQVQVA (120 aa). At 27-254 the chain is on the extracellular side; sequence SIWKADFDVT…RSSQFTAWKA (228 aa). An intrachain disulfide couples C54 to C128. A glycan (N-linked (GlcNAc...) asparagine) is linked at N59. The chain crosses the membrane as a helical span at residues 255–275; sequence ALPLILVAMGLVIAGGICIFW. At 276 to 291 the chain is on the cytoplasmic side; it reads KRQREKNKASLEEERE.

This sequence belongs to the immunoglobulin superfamily. BTN/MOG family.

Its subcellular location is the membrane. In Homo sapiens (Human), this protein is Putative butyrophilin-like protein 10 pseudogene.